Consider the following 163-residue polypeptide: S-fimbrial adhesin protein SfaS (163 aa).

The signal sequence occupies residues 1–22; that stretch reads MKLKAIILATGLINCIAFSAQA. A disulfide bridge connects residues Cys38 and Cys75. The interval 138–144 is involved in sialic acid binding; the sequence is KARAVSK.

This sequence belongs to the fimbrial protein family.

It is found in the fimbrium. Functionally, fimbriae (also called pili), polar filaments radiating from the surface of the bacterium to a length of 0.5-1.5 micrometers and numbering 100-300 per cell, enable bacteria to colonize the epithelium of specific host organs. Its function is as follows. A minor fimbrial subunit, this protein is necessary for full expression of S-specific binding. S-fimbrial adhesins enable pathogenic E.coli causing urinary-tract infections or newborn meningitis to attach to glycoproteins terminating with alpha-sialic acid-(2-3)-beta-Gal. This protein binds to the alpha-sialic acid-(2-3)-beta-Gal and is thus responsible for erythrocyte recognition and hemagglutination. The protein is S-fimbrial adhesin protein SfaS (sfaS) of Escherichia coli O6:K15:H31 (strain 536 / UPEC).